The primary structure comprises 224 residues: UPF0173 metal-dependent hydrolase EAT1b_0495 (224 aa).

The protein belongs to the UPF0173 family.

This chain is UPF0173 metal-dependent hydrolase EAT1b_0495, found in Exiguobacterium sp. (strain ATCC BAA-1283 / AT1b).